Reading from the N-terminus, the 433-residue chain is 3-phosphoshikimate 1-carboxyvinyltransferase (433 aa).

The 3-phosphoshikimate site is built by K21, S22, and R26. K21 lines the phosphoenolpyruvate pocket. Positions 96 and 124 each coordinate phosphoenolpyruvate. Residues S167, S168, Q169, S195, D310, and K337 each coordinate 3-phosphoshikimate. Q169 provides a ligand contact to phosphoenolpyruvate. The active-site Proton acceptor is D310. Residues R341, R384, and K410 each coordinate phosphoenolpyruvate.

This sequence belongs to the EPSP synthase family. As to quaternary structure, monomer.

The protein resides in the cytoplasm. It carries out the reaction 3-phosphoshikimate + phosphoenolpyruvate = 5-O-(1-carboxyvinyl)-3-phosphoshikimate + phosphate. It functions in the pathway metabolic intermediate biosynthesis; chorismate biosynthesis; chorismate from D-erythrose 4-phosphate and phosphoenolpyruvate: step 6/7. Its function is as follows. Catalyzes the transfer of the enolpyruvyl moiety of phosphoenolpyruvate (PEP) to the 5-hydroxyl of shikimate-3-phosphate (S3P) to produce enolpyruvyl shikimate-3-phosphate and inorganic phosphate. The chain is 3-phosphoshikimate 1-carboxyvinyltransferase from Clostridium botulinum (strain Alaska E43 / Type E3).